Consider the following 262-residue polypeptide: Hydroxyethylthiazole kinase (262 aa).

Methionine 40 is a binding site for substrate. 2 residues coordinate ATP: lysine 116 and threonine 162. A substrate-binding site is contributed by glycine 189.

This sequence belongs to the Thz kinase family. Mg(2+) is required as a cofactor.

It carries out the reaction 5-(2-hydroxyethyl)-4-methylthiazole + ATP = 4-methyl-5-(2-phosphooxyethyl)-thiazole + ADP + H(+). Its pathway is cofactor biosynthesis; thiamine diphosphate biosynthesis; 4-methyl-5-(2-phosphoethyl)-thiazole from 5-(2-hydroxyethyl)-4-methylthiazole: step 1/1. Its function is as follows. Catalyzes the phosphorylation of the hydroxyl group of 4-methyl-5-beta-hydroxyethylthiazole (THZ). The chain is Hydroxyethylthiazole kinase from Clostridioides difficile (strain 630) (Peptoclostridium difficile).